The following is a 492-amino-acid chain: Zn(2)-C6 fungal-type transcription factor (492 aa).

A DNA-binding region (zn(2)-C6 fungal-type) is located at residues 14-41; it reads CRRCKNRKIKCDEVHPRCGNCAKHGVPC. Positions 58 to 119 are disordered; it reads TSTESVGAPT…QPSISSSTNT (62 aa). A compositionally biased stretch (low complexity) spans 78–95; that stretch reads SAPRTPLTRPRAPSSPAR. Thr82 carries the post-translational modification Phosphothreonine. Residues Ser92 and Ser102 each carry the phosphoserine modification. The segment covering 107-119 has biased composition (polar residues); sequence VYSQPSISSSTNT. The residue at position 217 (Thr217) is a Phosphothreonine. Ser305 is modified (phosphoserine).

As to quaternary structure, interacts with HOG1. Phosphorylation at Thr-82, Ser-92, Ser-102, thr-117 and ser-305 by HOG1 is required for regulating expression of ergosterol biosynthesis genes.

The protein localises to the nucleus. Its function is as follows. Transcription factor that targets gene promoters containing 2 conserved CGAA repeat sequences. Positively regulates the expression of ergosterol biosynthesis genes including CYP51A and CYP51B encoding the sterol 14-alpha demethylase, and ERG6A and ERG6B encoding the sterol 24-C-methyltransferase. This chain is Zn(2)-C6 fungal-type transcription factor, found in Gibberella zeae (strain ATCC MYA-4620 / CBS 123657 / FGSC 9075 / NRRL 31084 / PH-1) (Wheat head blight fungus).